Here is a 220-residue protein sequence, read N- to C-terminus: Large ribosomal subunit protein uL16z (220 aa).

Belongs to the universal ribosomal protein uL16 family. As to quaternary structure, component of the small ribosomal subunit. Mature ribosomes consist of a small (40S) and a large (60S) subunit. The 40S subunit contains about 33 different proteins and 1 molecule of RNA (18S). The 60S subunit contains about 49 different proteins and 3 molecules of RNA (25S, 5.8S and 5S). Interacts with NIK1. Interacts with LIMYB. Phosphorylated by NIK1 and NIK2 in vitro. Ubiquitous, with the highest expression in flowers. Expressed in seedlings, leaves, roots, stems and flowers. Expressed in young leaves, mostly in dividing cells and in the hydathodes, in the root tips and lateral root primordia, in pistils, anthers, and pollen grains, and in developing seeds.

It localises to the cytoplasm. The protein localises to the nucleus. Functionally, ribosomal protein involved in translational regulation. Contribute to general translation under UV-B stress. Involved in the NIK1-mediated defense response to geminivirus infection. Acts coordinately with LIMYB as a transcriptional repressor. This is Large ribosomal subunit protein uL16z from Arabidopsis thaliana (Mouse-ear cress).